The sequence spans 735 residues: Glycogen [starch] synthase, muscle (735 aa).

Phosphoserine; by AMPK and PKA is present on serine 8. A Phosphoserine modification is found at serine 11. Lysine 39 serves as a coordination point for UDP. 2 residues coordinate UDP-alpha-D-glucose: histidine 205 and arginine 211. The alpha-D-glucose 6-phosphate site is built by histidine 291, glutamate 292, glutamine 294, histidine 297, and lysine 301. Arginine 331 serves as a coordination point for UDP. UDP-alpha-D-glucose is bound at residue arginine 331. Serine 412 bears the Phosphoserine mark. Residue histidine 501 coordinates alpha-D-glucose 6-phosphate. UDP-alpha-D-glucose is bound by residues glutamate 510, tryptophan 512, and glycine 513. Threonine 515 contributes to the UDP binding site. Alpha-D-glucose 6-phosphate contacts are provided by arginine 582 and arginine 586. A disordered region spans residues 629–735 (DATQGYRYPR…PASSLGEERN (107 aa)). The residue at position 641 (serine 641) is a Phosphoserine; by DYRK2, GSK3-alpha, GSK3-beta and PASK. 2 positions are modified to phosphoserine; by GSK3-alpha and GSK3-beta: serine 645 and serine 649. A Phosphoserine modification is found at serine 652. Serine 653 carries the phosphoserine; by GSK3-alpha and GSK3-beta modification. Position 657 is a phosphoserine; by CK2 (serine 657). Positions 658 to 681 (EDEEEPRDGLPEEDGERYDEDEEA) are enriched in acidic residues. Residues 682 to 695 (AKDRRNIRAPEWPR) are compositionally biased toward basic and acidic residues. Serine 698 carries the phosphoserine modification. The segment covering 698 to 735 (SCTSSSGGSKRSNSVDTSSLSTPSEPLSPASSLGEERN) has biased composition (low complexity). Threonine 700 is modified (phosphothreonine). Phosphoserine occurs at positions 709 and 711. At threonine 719 the chain carries Phosphothreonine. Serine 725 and serine 729 each carry phosphoserine.

The protein belongs to the glycosyltransferase 3 family. Part of the GYS1-GYG1 complex, a heterooctamer composed of a tetramer of GYS1 and 2 dimers of GYG1, where each GYS1 protomer binds to one GYG1 subunit (via GYG1 C-terminus); the GYS1 tetramer may dissociate from GYG1 dimers to continue glycogen polymerization on its own. Phosphorylation at Ser-8 is required for modification of Ser-11 by casein kinase I. In terms of processing, phosphorylated at Ser-641 by PASK, leading to inactivation; phosphorylation by PASK is inhibited by glycogen. Dephosphorylation at Ser-641 and Ser-645 by PP1 activates the enzyme. Phosphorylation at Ser-8 by AMPK inactivates the enzyme activity. Phosphorylated at Ser-641 by DYRK2, leading to inactivation. Primed phosphorylation at Ser-657 (site 5) by CSNK2A1 and CSNK2A2 is required for inhibitory phosphorylation at Ser-641 (site 3a), Ser-645 (site 3b), Ser-649 (site 3c) and Ser-653 (site 4) by GSK3A and GSK3B.

The enzyme catalyses [(1-&gt;4)-alpha-D-glucosyl](n) + UDP-alpha-D-glucose = [(1-&gt;4)-alpha-D-glucosyl](n+1) + UDP + H(+). Its pathway is glycan biosynthesis; glycogen biosynthesis. Allosteric activation by glucose-6-phosphate. Phosphorylation reduces the activity towards UDP-glucose. When in the non-phosphorylated state, glycogen synthase does not require glucose-6-phosphate as an allosteric activator; when phosphorylated it does. Its function is as follows. Glycogen synthase participates in the glycogen biosynthetic process along with glycogenin and glycogen branching enzyme. Extends the primer composed of a few glucose units formed by glycogenin by adding new glucose units to it. In this context, glycogen synthase transfers the glycosyl residue from UDP-Glc to the non-reducing end of alpha-1,4-glucan. The polypeptide is Glycogen [starch] synthase, muscle (Oryctolagus cuniculus (Rabbit)).